The sequence spans 236 residues: Probable metal transport system ATP-binding protein TC_0697 (236 aa).

The ABC transporter domain maps to 5-236; the sequence is LILENVSFRY…FCCNTFGKCS (232 aa). 39-46 contributes to the ATP binding site; that stretch reads GPNGGGKT.

This sequence belongs to the ABC transporter superfamily.

The protein resides in the cell inner membrane. Its function is as follows. Part of an ATP-driven transport system TC_0696/TC_0697/TC_0698 for a metal. Probably responsible for energy coupling to the transport system. The sequence is that of Probable metal transport system ATP-binding protein TC_0697 from Chlamydia muridarum (strain MoPn / Nigg).